A 651-amino-acid polypeptide reads, in one-letter code: Acetyl-coenzyme A synthetase (651 aa).

CoA is bound by residues 189-192 (RGGK), Thr311, and Asn335. ATP-binding positions include 387 to 389 (GEP), 411 to 416 (DTWWQT), Asp500, and Arg515. Position 523 (Ser523) interacts with CoA. Arg526 serves as a coordination point for ATP. Val537, His539, and Val542 together coordinate Mg(2+). Arg586 lines the CoA pocket. At Lys611 the chain carries N6-acetyllysine.

The protein belongs to the ATP-dependent AMP-binding enzyme family. Mg(2+) is required as a cofactor. Post-translationally, acetylated. Deacetylation by the SIR2-homolog deacetylase activates the enzyme.

The enzyme catalyses acetate + ATP + CoA = acetyl-CoA + AMP + diphosphate. In terms of biological role, catalyzes the conversion of acetate into acetyl-CoA (AcCoA), an essential intermediate at the junction of anabolic and catabolic pathways. AcsA undergoes a two-step reaction. In the first half reaction, AcsA combines acetate with ATP to form acetyl-adenylate (AcAMP) intermediate. In the second half reaction, it can then transfer the acetyl group from AcAMP to the sulfhydryl group of CoA, forming the product AcCoA. The protein is Acetyl-coenzyme A synthetase of Brucella melitensis biotype 1 (strain ATCC 23456 / CCUG 17765 / NCTC 10094 / 16M).